The primary structure comprises 139 residues: FAD synthase (139 aa).

ATP is bound by residues 8-9 (VF), 13-16 (HPGH), aspartate 92, and tyrosine 119.

The protein belongs to the archaeal FAD synthase family. Homodimer. The cofactor is a divalent metal cation.

The enzyme catalyses FMN + ATP + H(+) = FAD + diphosphate. It participates in cofactor biosynthesis; FAD biosynthesis; FAD from FMN: step 1/1. In terms of biological role, catalyzes the transfer of the AMP portion of ATP to flavin mononucleotide (FMN) to produce flavin adenine dinucleotide (FAD) coenzyme. The sequence is that of FAD synthase from Picrophilus torridus (strain ATCC 700027 / DSM 9790 / JCM 10055 / NBRC 100828 / KAW 2/3).